Consider the following 464-residue polypeptide: MNSFSPTEDTIAAIATAVSPGQGSIAAIRISGSSAIETSKNIVDVPGIQDWSTHKVLYGHVTEENRKKYIDEVLILVMKGPRSFTGEDVVEIHCHGGIIPVQKILERILAFPSVRRAEPGEFSQRAVLNGRLSLTQAESISELVSARSRKAAELAINGIEGNIQTTIQSIRKRLIEQLTEIEARIDFEEDLPLLDEKHVKNEIVAIKKDLNELIDNAKRGSWVRSGLKVALTGKPNVGKSSLMNRLSKQEKAIVTDLPGTTRDILESEIILEGIPVTFIDTAGLRDTKDIIEKIGISRTKKTLIHADLIILIFDYSSGWTNEDESILKQLPINIPLLIVGNKSDLTNDQSFEKVPKYILKKENLVIISAKTGNGEDDLINYLLKKCGSSQTHGLDIALNERQLDLAKSTMKSLENINKVFDEKLPWDFWTIDLRQAINYLGELTGEDLTESLLDNIFSKFCIGK.

(6S)-5-formyl-5,6,7,8-tetrahydrofolate is bound by residues Arg29, Glu91, and Arg131. One can recognise a TrmE-type G domain in the interval 226 to 387; the sequence is GLKVALTGKP…LINYLLKKCG (162 aa). Position 236 (Asn236) interacts with K(+). Residues 236–241, 255–261, and 280–283 each bind GTP; these read NVGKSS, TDLPGTT, and DTAG. Ser240 is a Mg(2+) binding site. K(+) contacts are provided by Thr255, Leu257, and Thr260. Thr261 provides a ligand contact to Mg(2+). Lys464 lines the (6S)-5-formyl-5,6,7,8-tetrahydrofolate pocket.

Belongs to the TRAFAC class TrmE-Era-EngA-EngB-Septin-like GTPase superfamily. TrmE GTPase family. Homodimer. Heterotetramer of two MnmE and two MnmG subunits. Requires K(+) as cofactor.

It localises to the cytoplasm. Its function is as follows. Exhibits a very high intrinsic GTPase hydrolysis rate. Involved in the addition of a carboxymethylaminomethyl (cmnm) group at the wobble position (U34) of certain tRNAs, forming tRNA-cmnm(5)s(2)U34. This chain is tRNA modification GTPase MnmE, found in Prochlorococcus marinus (strain NATL2A).